The primary structure comprises 31 residues: Photosystem I reaction center subunit XII (31 aa).

The chain crosses the membrane as a helical span at residues 7 to 26 (QIFIALLTALIPAFFALKLG).

The protein belongs to the PsaM family.

It is found in the plastid. The protein resides in the chloroplast thylakoid membrane. The chain is Photosystem I reaction center subunit XII from Euglena granulata.